A 318-amino-acid polypeptide reads, in one-letter code: Endochitinase 3 (318 aa).

The N-terminal stretch at 1–18 (EFTIFSLLFSLLLLNASA) is a signal peptide. In terms of domain architecture, Chitin-binding type-1 spans 19 to 60 (EQCGSQAGGALCAPGLCCSKFGWCGNTNDYCGPGNCQSQCPG). Disulfide bonds link Cys-21/Cys-36, Cys-30/Cys-42, Cys-35/Cys-49, Cys-54/Cys-58, Cys-89/Cys-152, Cys-164/Cys-172, and Cys-271/Cys-303. The active-site Proton donor is Glu-134. Residues 312 to 318 (GLLVDTV) constitute a propeptide, removed in mature form, vacuolar targeting.

This sequence belongs to the glycosyl hydrolase 19 family. Chitinase class I subfamily.

It is found in the vacuole. The catalysed reaction is Random endo-hydrolysis of N-acetyl-beta-D-glucosaminide (1-&gt;4)-beta-linkages in chitin and chitodextrins.. Functionally, defense against chitin-containing fungal pathogens. This chain is Endochitinase 3 (CHTB3), found in Solanum tuberosum (Potato).